A 208-amino-acid chain; its full sequence is NAD(P)H-quinone oxidoreductase subunit I (208 aa).

4Fe-4S ferredoxin-type domains are found at residues 55 to 84 (GRIH…VDWV) and 95 to 124 (RNYS…MTEE). Positions 64, 67, 70, 74, 104, 107, 110, and 114 each coordinate [4Fe-4S] cluster.

Belongs to the complex I 23 kDa subunit family. NDH-1 is composed of at least 11 different subunits. It depends on [4Fe-4S] cluster as a cofactor.

It is found in the cellular thylakoid membrane. The enzyme catalyses a plastoquinone + NADH + (n+1) H(+)(in) = a plastoquinol + NAD(+) + n H(+)(out). It catalyses the reaction a plastoquinone + NADPH + (n+1) H(+)(in) = a plastoquinol + NADP(+) + n H(+)(out). Its function is as follows. NDH-1 shuttles electrons from an unknown electron donor, via FMN and iron-sulfur (Fe-S) centers, to quinones in the respiratory and/or the photosynthetic chain. The immediate electron acceptor for the enzyme in this species is believed to be plastoquinone. Couples the redox reaction to proton translocation, and thus conserves the redox energy in a proton gradient. This Prochlorococcus marinus (strain MIT 9215) protein is NAD(P)H-quinone oxidoreductase subunit I.